A 202-amino-acid chain; its full sequence is Ras-related protein Rab-18 (202 aa).

GTP contacts are provided by Ser18, Gly21, Lys22, Ser23, Ser24, Asp35, Pro36, Thr41, Gly67, Lys124, Asp126, and Ala153. The Effector region motif lies at 38-46 (QAATIGVDF). Residues Cys198 and Cys200 are each lipidated (S-geranylgeranyl cysteine).

It belongs to the small GTPase superfamily. Rab family.

The protein resides in the cell membrane. The enzyme catalyses GTP + H2O = GDP + phosphate + H(+). Functionally, the small GTPases Rab are key regulators of intracellular membrane trafficking, from the formation of transport vesicles to their fusion with membranes. Rabs cycle between an inactive GDP-bound form and an active GTP-bound form that is able to recruit to membranes different sets of downstream effectors directly responsible for vesicle formation, movement, tethering and fusion. This is Ras-related protein Rab-18 (RAB18A) from Lymnaea stagnalis (Great pond snail).